Consider the following 378-residue polypeptide: D-alanine--D-alanine ligase (378 aa).

An ATP-grasp domain is found at 149-374 (KVLLAAAGIP…YTDLITKLIE (226 aa)). 189 to 247 (EAGLQYPLFVKPSRAGSSFGVTKVEHEGDAAELAAAVYEASRHDWRILVEQGIDAREIE) is a binding site for ATP. Residues Asp328, Glu341, and Asn343 each contribute to the Mg(2+) site.

It belongs to the D-alanine--D-alanine ligase family. Mg(2+) serves as cofactor. The cofactor is Mn(2+).

The protein localises to the cytoplasm. The catalysed reaction is 2 D-alanine + ATP = D-alanyl-D-alanine + ADP + phosphate + H(+). Its pathway is cell wall biogenesis; peptidoglycan biosynthesis. Cell wall formation. The sequence is that of D-alanine--D-alanine ligase from Bifidobacterium adolescentis (strain ATCC 15703 / DSM 20083 / NCTC 11814 / E194a).